A 471-amino-acid chain; its full sequence is Histidinol dehydrogenase (471 aa).

Residues Tyr-139, Gln-204, and Asn-236 each coordinate NAD(+). Substrate contacts are provided by Thr-259, Gln-281, and His-284. Zn(2+)-binding residues include Gln-281 and His-284. Active-site proton acceptor residues include Glu-350 and His-351. Substrate contacts are provided by His-351, Asp-384, Glu-438, and His-443. Asp-384 provides a ligand contact to Zn(2+). A Zn(2+)-binding site is contributed by His-443.

The protein belongs to the histidinol dehydrogenase family. It depends on Zn(2+) as a cofactor.

It catalyses the reaction L-histidinol + 2 NAD(+) + H2O = L-histidine + 2 NADH + 3 H(+). It functions in the pathway amino-acid biosynthesis; L-histidine biosynthesis; L-histidine from 5-phospho-alpha-D-ribose 1-diphosphate: step 9/9. In terms of biological role, catalyzes the sequential NAD-dependent oxidations of L-histidinol to L-histidinaldehyde and then to L-histidine. This chain is Histidinol dehydrogenase, found in Bifidobacterium longum (strain NCC 2705).